A 149-amino-acid polypeptide reads, in one-letter code: Calmodulin (149 aa).

Ala-2 carries the post-translational modification N-acetylalanine. 4 consecutive EF-hand domains span residues 8 to 43 (EQIAEFKEAFSLFDKDGDGTITTKELGTVMRSLGQN), 44 to 79 (PTEAELQDMINEVDSDGNGTIDFPEFLSLMARKMKD), 81 to 116 (DTEEELIEAFKVFDRDGNGFISAAELRHVMTNLGEK), and 117 to 149 (LTDEEVDEMIREADVDGDGQINYEEFVKMMMAK). 14 residues coordinate Ca(2+): Asp-21, Asp-23, Asp-25, Thr-27, Glu-32, Asp-57, Asp-59, Asn-61, Thr-63, Glu-68, Asp-94, Asp-96, Asn-98, and Glu-105. Lys-116 carries the N6,N6,N6-trimethyllysine modification. Asp-130, Asp-132, Asp-134, Gln-136, and Glu-141 together coordinate Ca(2+).

It belongs to the calmodulin family.

Calmodulin mediates the control of a large number of enzymes, ion channels and other proteins by Ca(2+). Among the enzymes to be stimulated by the calmodulin-Ca(2+) complex are a number of protein kinases and phosphatases. This chain is Calmodulin, found in Heterocapsa triquetra (Dinoflagellate).